The following is a 209-amino-acid chain: Imidazole glycerol phosphate synthase subunit HisH (209 aa).

A Glutamine amidotransferase type-1 domain is found at 3 to 209 (KIGLIDYGMG…WINWLKKNKF (207 aa)). C81 acts as the Nucleophile in catalysis. Residues H185 and E187 contribute to the active site.

As to quaternary structure, heterodimer of HisH and HisF.

Its subcellular location is the cytoplasm. The catalysed reaction is 5-[(5-phospho-1-deoxy-D-ribulos-1-ylimino)methylamino]-1-(5-phospho-beta-D-ribosyl)imidazole-4-carboxamide + L-glutamine = D-erythro-1-(imidazol-4-yl)glycerol 3-phosphate + 5-amino-1-(5-phospho-beta-D-ribosyl)imidazole-4-carboxamide + L-glutamate + H(+). It carries out the reaction L-glutamine + H2O = L-glutamate + NH4(+). It participates in amino-acid biosynthesis; L-histidine biosynthesis; L-histidine from 5-phospho-alpha-D-ribose 1-diphosphate: step 5/9. In terms of biological role, IGPS catalyzes the conversion of PRFAR and glutamine to IGP, AICAR and glutamate. The HisH subunit catalyzes the hydrolysis of glutamine to glutamate and ammonia as part of the synthesis of IGP and AICAR. The resulting ammonia molecule is channeled to the active site of HisF. In Prochlorococcus marinus (strain NATL2A), this protein is Imidazole glycerol phosphate synthase subunit HisH.